The chain runs to 390 residues: Tuftelin (390 aa).

2 coiled-coil regions span residues 88–126 (DKMT…KLDR) and 163–352 (PSMS…EKQV). The segment at 356-383 (NFSTQARAKTENLGSVRISKPPSPKPMP) is disordered.

Belongs to the tuftelin family. In terms of assembly, interacts with TFIP11. May form oligomers. As to expression, ameloblasts, and also non-odontogenic tissues including kidney, lung, liver and testis.

The protein resides in the secreted. Functionally, involved in the structural organization of the epidermis. Involved in the mineralization and structural organization of enamel. In Mus musculus (Mouse), this protein is Tuftelin (Tuft1).